Reading from the N-terminus, the 305-residue chain is Ribonuclease BN (305 aa).

Zn(2+) is bound by residues histidine 63, histidine 65, aspartate 67, histidine 68, histidine 141, aspartate 212, and histidine 270. The Proton acceptor role is filled by aspartate 67.

It belongs to the RNase Z family. RNase BN subfamily. In terms of assembly, homodimer. Requires Zn(2+) as cofactor.

Zinc phosphodiesterase, which has both exoribonuclease and endoribonuclease activities. The protein is Ribonuclease BN of Proteus mirabilis (strain HI4320).